A 95-amino-acid polypeptide reads, in one-letter code: Small ribosomal subunit protein bS6 (95 aa).

This sequence belongs to the bacterial ribosomal protein bS6 family.

In terms of biological role, binds together with bS18 to 16S ribosomal RNA. In Bacillus pumilus (strain SAFR-032), this protein is Small ribosomal subunit protein bS6.